The sequence spans 388 residues: F-box/LRR-repeat protein At3g59190 (388 aa).

An F-box domain is found at Lys-11–Pro-64. 5 LRR repeats span residues Lys-151–Ala-177, Phe-180–Lys-205, Cys-228–Asp-252, Thr-313–Thr-345, and Asp-346–Val-371.

This Arabidopsis thaliana (Mouse-ear cress) protein is F-box/LRR-repeat protein At3g59190.